Consider the following 908-residue polypeptide: Auxin response factor 6 (908 aa).

Positions 1–21 (MKLSPSAGGVSDQPPSPPEVA) are disordered. The segment at residues 134 to 236 (FCKTLTASDT…QLLLGIRRAN (103 aa)) is a DNA-binding region (TF-B3). Residues 525-556 (NEQKPQLQPQQQQQESHQQQPQHQQMQQQKHL) form a disordered region. Positions 526–556 (EQKPQLQPQQQQQESHQQQPQHQQMQQQKHL) are enriched in low complexity. The PB1 domain maps to 777 to 861 (ATFVKVYKSG…SCIKILSPQE (85 aa)).

It belongs to the ARF family. As to quaternary structure, homodimers and heterodimers.

The protein resides in the nucleus. In terms of biological role, auxin response factors (ARFs) are transcriptional factors that bind specifically to the DNA sequence 5'-TGTCTC-3' found in the auxin-responsive promoter elements (AuxREs). The chain is Auxin response factor 6 (ARF6) from Oryza sativa subsp. indica (Rice).